Here is a 349-residue protein sequence, read N- to C-terminus: Galanin receptor type 1 (349 aa).

At 1 to 36 (MELAVGNLSEGNASWPEPPAPEPGPLFGIGVENFVT) the chain is on the extracellular side. 2 N-linked (GlcNAc...) asparagine glycosylation sites follow: asparagine 7 and asparagine 12. Residues 37 to 57 (LVVFGLIFALGVLGNSLVITV) form a helical membrane-spanning segment. Topologically, residues 58 to 70 (LARSKPGKPRSTT) are cytoplasmic. A helical membrane pass occupies residues 71–91 (NLFILNLSIADLAYLLFCIPF). Residues 92–109 (QATVYALPTWVLGAFICK) are Extracellular-facing. A disulfide bridge connects residues cysteine 108 and cysteine 187. Residues 110–131 (FIHYFFTVSMLVSIFTLAAMSV) traverse the membrane as a helical segment. The Cytoplasmic portion of the chain corresponds to 132 to 151 (DRYVAIVHSRRSSSLRVSRN). Residues 152-172 (ALLGVGCIWALSIAMASPVAY) form a helical membrane-spanning segment. Residues 173 to 200 (HQGLFHPRASNQTFCWEQWPDPRHKKAY) are Extracellular-facing. A glycan (N-linked (GlcNAc...) asparagine) is linked at asparagine 183. A helical transmembrane segment spans residues 201-221 (VVCTFVFGYLLPLLLICFCYA). Topologically, residues 222–248 (KVLNHLHKKLKNMSKKSEASKKKTAQT) are cytoplasmic. A helical transmembrane segment spans residues 249 to 269 (VLVVVVVFGISWLPHHIIHLW). Residues 270 to 271 (AE) are Extracellular-facing. Residues 272 to 292 (FGVFPLTPASFLFRITAHCLA) traverse the membrane as a helical segment. Over 293-349 (YSNSSVNPIIYAFLSENFRKAYKQVFKCHIRKDSHLSDTKESKSRIDTPPSTNCTHV) the chain is Cytoplasmic. Cysteine 320 carries S-palmitoyl cysteine lipidation.

The protein belongs to the G-protein coupled receptor 1 family. Interacts with GRP39 AND HTR1A. Post-translationally, palmitoylated on at least one of the three cysteine residues present in the C-terminal part.

It is found in the cell membrane. In terms of biological role, receptor for the hormone galanin. The activity of this receptor is mediated by G proteins that inhibit adenylate cyclase activity. This Homo sapiens (Human) protein is Galanin receptor type 1 (GALR1).